We begin with the raw amino-acid sequence, 287 residues long: ATP synthase gamma chain (287 aa).

It belongs to the ATPase gamma chain family. As to quaternary structure, F-type ATPases have 2 components, CF(1) - the catalytic core - and CF(0) - the membrane proton channel. CF(1) has five subunits: alpha(3), beta(3), gamma(1), delta(1), epsilon(1). CF(0) has three main subunits: a, b and c.

The protein resides in the cell inner membrane. In terms of biological role, produces ATP from ADP in the presence of a proton gradient across the membrane. The gamma chain is believed to be important in regulating ATPase activity and the flow of protons through the CF(0) complex. The protein is ATP synthase gamma chain of Shigella boydii serotype 4 (strain Sb227).